The sequence spans 665 residues: Protein kinase domain-containing protein ppk2 (665 aa).

4 disordered regions span residues Pro42 to Phe63, Gly82 to Ser152, Leu187 to Asn217, and Ala286 to Pro343. Residues Gly82–Trp104 are compositionally biased toward polar residues. 2 stretches are compositionally biased toward low complexity: residues Ser137–Ser152 and Thr206–Asn217. Residues Ser294–Val316 show a composition bias toward polar residues. Residue Ser358 is modified to Phosphoserine. One can recognise a Protein kinase domain in the interval Tyr388–Leu637. ATP-binding positions include Ile394–Thr402 and Lys417.

It localises to the cytoplasm. This chain is Protein kinase domain-containing protein ppk2 (ppk2), found in Schizosaccharomyces pombe (strain 972 / ATCC 24843) (Fission yeast).